Reading from the N-terminus, the 302-residue chain is MRHLISMRDIGRDDILRILEESEKMEAVLNEKGHSDILNGKILATLFYEPSTRTRLSFETAMKRLGGNVIGFTDISNTSVTKGESLTDTIKVISGYSDLIVIRHPSEGAARLSSEVSGVPVINAGDGSNQHPTQTLLDLYTIKREVGKIDGLKIAFIGDLKYGRTVHSLCQALSLFKNVELRLISPDELKIPREVLEYIDGKVLLSETSEINIEDVDVVYMTRIQKERFIDLNEYQKVKGTYRLLKEHVLEKNLIIMHPLPRVDEIDSKVDSLNQAKYFKQSFYGVPVRMAILSLLSKDLQK.

Residues Arg-53 and Thr-54 each contribute to the carbamoyl phosphate site. Residue Lys-82 coordinates L-aspartate. Carbamoyl phosphate is bound by residues Arg-103, His-131, and Gln-134. L-aspartate is bound by residues Arg-164 and Arg-223. Residues Leu-260 and Pro-261 each coordinate carbamoyl phosphate.

The protein belongs to the aspartate/ornithine carbamoyltransferase superfamily. ATCase family. Heterooligomer of catalytic and regulatory chains.

The enzyme catalyses carbamoyl phosphate + L-aspartate = N-carbamoyl-L-aspartate + phosphate + H(+). It participates in pyrimidine metabolism; UMP biosynthesis via de novo pathway; (S)-dihydroorotate from bicarbonate: step 2/3. In terms of biological role, catalyzes the condensation of carbamoyl phosphate and aspartate to form carbamoyl aspartate and inorganic phosphate, the committed step in the de novo pyrimidine nucleotide biosynthesis pathway. This Methanococcus vannielii (strain ATCC 35089 / DSM 1224 / JCM 13029 / OCM 148 / SB) protein is Aspartate carbamoyltransferase catalytic subunit.